A 180-amino-acid polypeptide reads, in one-letter code: CDP-archaeol synthase (180 aa).

Transmembrane regions (helical) follow at residues 5–25, 54–74, 78–98, 118–138, and 142–162; these read LVAT…AAVL, AVGT…AEPA, LGVD…FGAM, AFPG…VFVV, and WALA…TPIL.

It belongs to the CDP-archaeol synthase family. The cofactor is Mg(2+).

The protein localises to the cell membrane. It catalyses the reaction 2,3-bis-O-(geranylgeranyl)-sn-glycerol 1-phosphate + CTP + H(+) = CDP-2,3-bis-O-(geranylgeranyl)-sn-glycerol + diphosphate. It participates in membrane lipid metabolism; glycerophospholipid metabolism. In terms of biological role, catalyzes the formation of CDP-2,3-bis-(O-geranylgeranyl)-sn-glycerol (CDP-archaeol) from 2,3-bis-(O-geranylgeranyl)-sn-glycerol 1-phosphate (DGGGP) and CTP. This reaction is the third ether-bond-formation step in the biosynthesis of archaeal membrane lipids. The chain is CDP-archaeol synthase from Halorubrum lacusprofundi (strain ATCC 49239 / DSM 5036 / JCM 8891 / ACAM 34).